The following is a 382-amino-acid chain: Trophoblast glycoprotein-like (382 aa).

A signal peptide spans 1 to 26; that stretch reads MAPRAGQPGLQGLLLVAAALSQPAAP. 2 cysteine pairs are disulfide-bonded: Cys27–Cys33 and Cys31–Cys43. The Extracellular portion of the chain corresponds to 27 to 307; the sequence is CPFQCYCFGG…EAAGPELEAS (281 aa). LRR repeat units follow at residues 57-80, 93-116, 117-140, 171-194, and 196-217; these read PPDA…AFAG, LPLL…AFDG, LPSL…AFRG, LAEL…ALRL, and RLEQ…ELRA. Residue Asn62 is glycosylated (N-linked (GlcNAc...) asparagine). Disulfide bonds link Cys238–Cys264 and Cys240–Cys285. A helical membrane pass occupies residues 308-328; sequence YVFFGLVLALIGLIFLMVLYL. Residues 329-382 lie on the Cytoplasmic side of the membrane; sequence NRRGIQRWMRNLREACRDQMEGYHYRYEQDADPRRAPAPAAPAGSRATSPGSGL. The interval 358–382 is disordered; that stretch reads DADPRRAPAPAAPAGSRATSPGSGL. Positions 365-382 are enriched in low complexity; that stretch reads PAPAAPAGSRATSPGSGL.

The protein resides in the membrane. This Homo sapiens (Human) protein is Trophoblast glycoprotein-like (TPBGL).